The primary structure comprises 265 residues: MDYINAALLGVIEGITEFLPISSTGHLIIAEQWLGHRSDMFNIVIQAGAILAVTIIYWRRLLDLVLGWREPENRDYAAKLIVAFLITAILGLVVKKLGFELPETATPIAWALIIGGIWMIFAEWAAARKAPHKEITWLVAILVGIAQIVAGVFPGTSRSGATIFVAMLAGTGNRAAATEFAFLVGIPTMYAASGYELLKTFKDGGAAGEDWTALAIAFIVSTIVAFIAVKWLLAYIRSNRFTLFAIYRIILGVLLLGMATSGLIA.

7 consecutive transmembrane segments (helical) span residues 38-58, 80-100, 107-127, 135-155, 175-195, 213-233, and 244-264; these read SDMFNIVIQAGAILAVTIIYW, LIVAFLITAILGLVVKKLGFE, PIAWALIIGGIWMIFAEWAAA, ITWLVAILVGIAQIVAGVFPG, AAATEFAFLVGIPTMYAASGY, ALAIAFIVSTIVAFIAVKWLL, and FAIYRIILGVLLLGMATSGLI.

The protein belongs to the UppP family.

The protein resides in the cell inner membrane. The catalysed reaction is di-trans,octa-cis-undecaprenyl diphosphate + H2O = di-trans,octa-cis-undecaprenyl phosphate + phosphate + H(+). Catalyzes the dephosphorylation of undecaprenyl diphosphate (UPP). Confers resistance to bacitracin. The protein is Undecaprenyl-diphosphatase of Rhizobium etli (strain CIAT 652).